A 67-amino-acid chain; its full sequence is Protein AaeX (67 aa).

2 consecutive transmembrane segments (helical) span residues 3–23 (LFPV…KLLL) and 43–63 (FVWH…YLIS).

The protein belongs to the AaeX family.

It is found in the cell membrane. The chain is Protein AaeX from Salmonella gallinarum (strain 287/91 / NCTC 13346).